The sequence spans 153 residues: Proline-rich membrane anchor 1 (153 aa).

A signal peptide spans 1 to 35 (MLLRDLVLRHGCCWPSLLLHCALHPLWGLVQVTHA). The Extracellular portion of the chain corresponds to 36–92 (EPQKSCSKVTDSCQHICQCRPPPPLPPPPPPPPPPRLLSAPAPNSTSCPAEDSWWSG). A PRAD domain is found at 56–70 (PPPPLPPPPPPPPPP). Over residues 59 to 71 (PLPPPPPPPPPPR) the composition is skewed to pro residues. The segment at 59–79 (PLPPPPPPPPPPRLLSAPAPN) is disordered. Residue Asn-79 is glycosylated (N-linked (GlcNAc...) asparagine). A helical transmembrane segment spans residues 93–113 (LVIIVAVVCASLVFLTVLVII). The Cytoplasmic portion of the chain corresponds to 114 to 153 (CYKAIKRKPLRKDENGASVAEYPMSSSPSNKGVDVNAAVV). The interval 133-153 (AEYPMSSSPSNKGVDVNAAVV) is disordered.

In terms of assembly, interacts with ACHE, probably through disulfide bonds. In terms of tissue distribution, isoforms 1 and 2 are expressed in the adult brain. In matured cortical neurons, only isoform 1 is detectable.

The protein localises to the cell membrane. Its subcellular location is the cell junction. It localises to the synapse. Required to anchor acetylcholinesterase (ACHE) to the basal lamina of the neuromuscular junction and to the membrane of neuronal synapses in brain. Organizes ACHE into tetramers. The sequence is that of Proline-rich membrane anchor 1 (Prima1) from Rattus norvegicus (Rat).